Reading from the N-terminus, the 147-residue chain is uncharacterized protein (147 aa).

One can recognise an HTH asnC-type domain in the interval 2 to 63 (LDELDKKIIG…KLNYENIGYD (62 aa)). Residues 21 to 40 (YREIAKELNVAVGTIYNRIK) constitute a DNA-binding region (H-T-H motif).

This is an uncharacterized protein from Pyrococcus abyssi (strain GE5 / Orsay).